The following is a 623-amino-acid chain: MTIRHLSETIINQIAAGEVIERPASVIKELVENAIDAGATRIEVVTAGGGKTLLRVTDNGSGIPADELALAVSRHCTSKLTDDVHDIRALGFRGEALPSIGSVSKLTLKSRPQDADSGFEVCVTGGHLDGPRPTALNRGTIVEVRDLFYATPARLKFMKTDRAEATAITDVVKRIGIAFPHIRFSLAGTDRTPFEMPATGTGAEATLERIGQVLGREFGENALAIDAERDGVRLAGFVGIPSFNRGNALHQFAYVNGRPVRDKQIFGALRGAYSDVIARDRHPVAVLFLTLDPALVDVNVHPAKADVRFRDPGLVRGLIVGAIKQALAQSGIRPATSGAEAMLQAFRAEGFGAQQSAPRPANSYSPASWRTAPPAPRSEWSPQTAQTAHRPLDLQAAPALRENGQAVLGDVAVPASDARASVAEAPVELMQKPLGAARAQIHENYIVAQTEDSLVIVDQHAAHERLVYEALKNALHARPIAGQMLLIPEIVDLPEEDAQRLAGHAETLARFGLGVEQFGPGAIAVRETPAMLGEMNVQQLIRDLADEIAEHDTADGLKAMLHHVAATMACHGSVRSGRRLKPEEMNALLRDMEATPGSGTCNHGRPTYIELKLTDIERLFGRR.

Positions 353–368 (AQQSAPRPANSYSPAS) are enriched in polar residues. The interval 353–389 (AQQSAPRPANSYSPASWRTAPPAPRSEWSPQTAQTAH) is disordered.

The protein belongs to the DNA mismatch repair MutL/HexB family.

Its function is as follows. This protein is involved in the repair of mismatches in DNA. It is required for dam-dependent methyl-directed DNA mismatch repair. May act as a 'molecular matchmaker', a protein that promotes the formation of a stable complex between two or more DNA-binding proteins in an ATP-dependent manner without itself being part of a final effector complex. The protein is DNA mismatch repair protein MutL of Brucella melitensis biotype 2 (strain ATCC 23457).